Reading from the N-terminus, the 273-residue chain is Tryptase-2 (273 aa).

Residues methionine 1–proline 18 form the signal peptide. A propeptide spans alanine 19 to glycine 28 (activation peptide). The Peptidase S1 domain maps to isoleucine 29–proline 270. A disulfide bridge links cysteine 57 with cysteine 73. Residues histidine 72 and aspartate 119 each act as charge relay system in the active site. 3 disulfides stabilise this stretch: cysteine 153–cysteine 228, cysteine 186–cysteine 209, and cysteine 218–cysteine 246. Serine 222 (charge relay system) is an active-site residue. Asparagine 231 carries an N-linked (GlcNAc...) asparagine glycan.

It belongs to the peptidase S1 family. Tryptase subfamily. In terms of assembly, homotetramer.

It is found in the secreted. It carries out the reaction Preferential cleavage: Arg-|-Xaa, Lys-|-Xaa, but with more restricted specificity than trypsin.. Functionally, tryptase is the major neutral protease present in mast cells and is secreted upon the coupled activation-degranulation response of this cell type. The sequence is that of Tryptase-2 from Ovis aries (Sheep).